A 650-amino-acid polypeptide reads, in one-letter code: Acetyl-coenzyme A synthetase (650 aa).

CoA is bound by residues 191 to 194 (RGGR), T311, and N335. Residues 387-389 (GEP), 411-416 (DTWWQT), D500, and R515 each bind ATP. S523 contributes to the CoA binding site. R526 lines the ATP pocket. The Mg(2+) site is built by V537, H539, and V542. R584 lines the CoA pocket. K609 carries the post-translational modification N6-acetyllysine.

This sequence belongs to the ATP-dependent AMP-binding enzyme family. Requires Mg(2+) as cofactor. Acetylated. Deacetylation by the SIR2-homolog deacetylase activates the enzyme.

It catalyses the reaction acetate + ATP + CoA = acetyl-CoA + AMP + diphosphate. Functionally, catalyzes the conversion of acetate into acetyl-CoA (AcCoA), an essential intermediate at the junction of anabolic and catabolic pathways. AcsA undergoes a two-step reaction. In the first half reaction, AcsA combines acetate with ATP to form acetyl-adenylate (AcAMP) intermediate. In the second half reaction, it can then transfer the acetyl group from AcAMP to the sulfhydryl group of CoA, forming the product AcCoA. This is Acetyl-coenzyme A synthetase from Shewanella oneidensis (strain ATCC 700550 / JCM 31522 / CIP 106686 / LMG 19005 / NCIMB 14063 / MR-1).